A 230-amino-acid polypeptide reads, in one-letter code: Uracil-DNA glycosylase (230 aa).

Residue Asp-71 is the Proton acceptor of the active site.

This sequence belongs to the uracil-DNA glycosylase (UDG) superfamily. UNG family.

The protein resides in the cytoplasm. It catalyses the reaction Hydrolyzes single-stranded DNA or mismatched double-stranded DNA and polynucleotides, releasing free uracil.. Functionally, excises uracil residues from the DNA which can arise as a result of misincorporation of dUMP residues by DNA polymerase or due to deamination of cytosine. This is Uracil-DNA glycosylase from Nocardioides sp. (strain ATCC BAA-499 / JS614).